Reading from the N-terminus, the 362-residue chain is 2-oxoglutarate-dependent dioxygenase lolO2 (362 aa).

A Fe2OG dioxygenase domain is found at 199 to 312 (TWNYFLGQPV…RYSLVFFGHL (114 aa)). Fe cation-binding residues include His-222, Asp-224, and His-280. Arg-303 lines the 2-oxoglutarate pocket.

This sequence belongs to the iron/ascorbate-dependent oxidoreductase family. Fe(2+) serves as cofactor.

It participates in alkaloid biosynthesis. In terms of biological role, 2-oxoglutarate-dependent dioxygenase; part of the gene cluster that mediates the biosynthesis of loline alkaloids, potent insecticidal agents composed of a pyrrolizidine ring system and an uncommon ether bridge linking carbons 2 and 7. Lolines are structurally differentiated by the various modifications of the L-amino group and include norloline, loline, N-methylloline, N-acetylloline, N-acetylnorloline, and N-formylloline. The first committed step is the condensation of O-acetyl-L-homoserine (derived from L-aspartic acid) and L-proline, probably catalyzed by the gamma-type pyridoxal 5'-phosphate(PLP)-dependent enzyme lolC, to give the diamino diacid, NACPP. Ensuing cyclization, decarboxylation, and acetylation steps yield 1-exo-acetamidopyrrolizidine (AcAP). LolO is required for installation of the ether bridge upon the pathway intermediate, 1-exo-acetamidopyrrolizidine (AcAP). In sequential 2-oxoglutarate- and O(2)-consuming steps, lolO removes hydrogens from C2 and C7 of AcAP to form both carbon-oxygen bonds in N-acetylnorloline (NANL), the precursor to all other lolines. The enzymes lolD, lolE, lolF and lolT have also been proposed to be involved in the ether-bridge installation. Further processing of the exocyclic moiety of NANL by fungal N-acetamidase (LolN), methyltransferase (LolM), and cytochrome P450 (LolP) enzymes, with occasional involvement of a plant acetyltransferase, generates the other known lolines. LolN transforms NANL to norlonine which is monomethylated and dimethylated to respectively lonine and N-methyllonine (NML) by lolM. LolP catalyzes hydroxylation of the methyl group in N-methylloline (NML) and further oxygenation to N-formylloline (NFL). A plant acetyltransferase is responsible for the acetylation of loline to form N-acetylloline (NAL). LolA might interact with aspartate kinase to prevent feedback inhibition of its activity by these end products and thereby promote production of L-homoserine from L-aspartate. This chain is 2-oxoglutarate-dependent dioxygenase lolO2, found in Epichloe uncinata (Endophyte fungus).